The following is a 205-amino-acid chain: uncharacterized protein (205 aa).

Residues Ser-119 and His-160 each act as charge relay system in the active site.

Belongs to the peptidase S51 family.

This is an uncharacterized protein from Listeria monocytogenes serovar 1/2a (strain ATCC BAA-679 / EGD-e).